Here is a 380-residue protein sequence, read N- to C-terminus: Probable tRNA-splicing endonuclease subunit sen2 (380 aa).

Active-site residues include Tyr-281, His-289, and Lys-325.

It belongs to the tRNA-intron endonuclease family. Heterotetramer composed of sen2, sen15, sen34 and sen54. Interacts directly with sen54.

The catalysed reaction is pretRNA = a 3'-half-tRNA molecule with a 5'-OH end + a 5'-half-tRNA molecule with a 2',3'-cyclic phosphate end + an intron with a 2',3'-cyclic phosphate and a 5'-hydroxyl terminus.. Constitutes one of the two catalytic subunit of the tRNA-splicing endonuclease complex, a complex responsible for identification and cleavage of the splice sites in pre-tRNA. It cleaves pre-tRNA at the 5'- and 3'-splice sites to release the intron. The products are an intron and two tRNA half-molecules bearing 2',3'-cyclic phosphate and 5'-OH termini. There are no conserved sequences at the splice sites, but the intron is invariably located at the same site in the gene, placing the splice sites an invariant distance from the constant structural features of the tRNA body. This subunit may anchor the endonuclease complex to the nuclear membrane. Probably carries the active site for 5'-splice site cleavage. The protein is Probable tRNA-splicing endonuclease subunit sen2 (sen2) of Schizosaccharomyces pombe (strain 972 / ATCC 24843) (Fission yeast).